The following is a 104-amino-acid chain: MKFLIVFVALFAMAVARPNLAEIVRQVSDVEPEKWSSDVETSDGTSIKQEGVLKNAGTDNEAAVVHGSFTWVDEKTGEKFTITYVADENGYQPQGAHLPVAPVA.

The first 18 residues, 1-18, serve as a signal peptide directing secretion; sequence MKFLIVFVALFAMAVARP. The Chitin-binding type R&amp;R domain occupies 32-102; sequence PEKWSSDVET…PQGAHLPVAP (71 aa).

Its function is as follows. Component of the cuticle of the larva. This is Larval cuticle protein 65Ab1 from Drosophila melanogaster (Fruit fly).